The primary structure comprises 802 residues: DNA mismatch repair protein MutS (802 aa).

Residue Gly-617 to Ser-624 coordinates ATP.

It belongs to the DNA mismatch repair MutS family.

Its function is as follows. This protein is involved in the repair of mismatches in DNA. It is possible that it carries out the mismatch recognition step. This protein has a weak ATPase activity. The protein is DNA mismatch repair protein MutS of Buchnera aphidicola subsp. Acyrthosiphon pisum (strain 5A).